Consider the following 452-residue polypeptide: Protein mab-21-like 4 (452 aa).

This Mus musculus (Mouse) protein is Protein mab-21-like 4 (Mab21l4).